Here is a 362-residue protein sequence, read N- to C-terminus: Ferredoxin--NADP reductase 1 (362 aa).

FAD is bound by residues aspartate 47, glutamine 55, tyrosine 60, alanine 100, phenylalanine 141, aspartate 309, and serine 350.

Belongs to the ferredoxin--NADP reductase type 2 family. Homodimer. The cofactor is FAD.

It carries out the reaction 2 reduced [2Fe-2S]-[ferredoxin] + NADP(+) + H(+) = 2 oxidized [2Fe-2S]-[ferredoxin] + NADPH. The chain is Ferredoxin--NADP reductase 1 from Cupriavidus pinatubonensis (strain JMP 134 / LMG 1197) (Cupriavidus necator (strain JMP 134)).